Consider the following 489-residue polypeptide: Glutamyl-tRNA(Gln) amidotransferase subunit A (489 aa).

Residues Lys-78 and Ser-153 each act as charge relay system in the active site. The active-site Acyl-ester intermediate is the Ser-177.

Belongs to the amidase family. GatA subfamily. Heterotrimer of A, B and C subunits.

It catalyses the reaction L-glutamyl-tRNA(Gln) + L-glutamine + ATP + H2O = L-glutaminyl-tRNA(Gln) + L-glutamate + ADP + phosphate + H(+). Its function is as follows. Allows the formation of correctly charged Gln-tRNA(Gln) through the transamidation of misacylated Glu-tRNA(Gln) in organisms which lack glutaminyl-tRNA synthetase. The reaction takes place in the presence of glutamine and ATP through an activated gamma-phospho-Glu-tRNA(Gln). This is Glutamyl-tRNA(Gln) amidotransferase subunit A from Nitratidesulfovibrio vulgaris (strain DP4) (Desulfovibrio vulgaris).